The chain runs to 189 residues: Streptothricin acetyltransferase (189 aa).

The region spanning 44-189 (FALREVPADP…HALYMSMPCP (146 aa)) is the N-acetyltransferase domain. The tract at residues 55–76 (LVKVFPDDGGSDGEDGAEGEDA) is disordered. The segment covering 63–75 (GGSDGEDGAEGED) has biased composition (acidic residues).

The protein belongs to the acetyltransferase family. GNAT subfamily.

It catalyses the reaction streptothricin F + acetyl-CoA = N(beta)-acetylstreptothricin F + CoA + H(+). Functionally, involved in resistance to streptothricin, a broad-spectrum antibiotic produced by streptomycetes. Detoxifies streptothricin via acetylation of the beta amino group of the first beta-lysyl moiety of streptothricin. This chain is Streptothricin acetyltransferase, found in Streptomyces lavendulae.